A 334-amino-acid chain; its full sequence is Putative transport protein MTH_1211 (334 aa).

The next 8 membrane-spanning stretches (helical) occupy residues 24-44, 60-80, 84-104, 131-151, 189-209, 220-240, 255-275, and 289-309; these read AIVV…AYIV, VSII…LVFT, IINS…PGAG, YVVA…VFLS, VLLS…LMAA, AILL…GPWA, ILRG…DIYL, and MIFL…GFIV.

This sequence belongs to the autoinducer-2 exporter (AI-2E) (TC 2.A.86) family.

It is found in the cell membrane. This Methanothermobacter thermautotrophicus (strain ATCC 29096 / DSM 1053 / JCM 10044 / NBRC 100330 / Delta H) (Methanobacterium thermoautotrophicum) protein is Putative transport protein MTH_1211.